The sequence spans 77 residues: UPF0337 protein CE0198 (77 aa).

Residues 1-77 (MGDLSNKAEG…PDVEHPEAVN (77 aa)) form a disordered region. 2 stretches are compositionally biased toward basic and acidic residues: residues 30–56 (DEGRADQTKADIKEAVSDAGDKIKDGA) and 64–77 (QDKDPDVEHPEAVN).

This sequence belongs to the UPF0337 (CsbD) family.

In Corynebacterium efficiens (strain DSM 44549 / YS-314 / AJ 12310 / JCM 11189 / NBRC 100395), this protein is UPF0337 protein CE0198.